Consider the following 699-residue polypeptide: Elongation factor G (699 aa).

The region spanning E8 to L288 is the tr-type G domain. GTP contacts are provided by residues A17–T24, D86–H90, and N140–D143.

This sequence belongs to the TRAFAC class translation factor GTPase superfamily. Classic translation factor GTPase family. EF-G/EF-2 subfamily.

The protein resides in the cytoplasm. In terms of biological role, catalyzes the GTP-dependent ribosomal translocation step during translation elongation. During this step, the ribosome changes from the pre-translocational (PRE) to the post-translocational (POST) state as the newly formed A-site-bound peptidyl-tRNA and P-site-bound deacylated tRNA move to the P and E sites, respectively. Catalyzes the coordinated movement of the two tRNA molecules, the mRNA and conformational changes in the ribosome. The polypeptide is Elongation factor G (Rhizobium etli (strain ATCC 51251 / DSM 11541 / JCM 21823 / NBRC 15573 / CFN 42)).